A 320-amino-acid chain; its full sequence is o-succinylbenzoate synthase (320 aa).

The active-site Proton donor is lysine 133. Mg(2+) is bound by residues aspartate 161, glutamate 190, and aspartate 213. The Proton acceptor role is filled by lysine 235.

Belongs to the mandelate racemase/muconate lactonizing enzyme family. MenC type 1 subfamily. A divalent metal cation is required as a cofactor.

It carries out the reaction (1R,6R)-6-hydroxy-2-succinyl-cyclohexa-2,4-diene-1-carboxylate = 2-succinylbenzoate + H2O. Its pathway is quinol/quinone metabolism; 1,4-dihydroxy-2-naphthoate biosynthesis; 1,4-dihydroxy-2-naphthoate from chorismate: step 4/7. It participates in quinol/quinone metabolism; menaquinone biosynthesis. Its function is as follows. Converts 2-succinyl-6-hydroxy-2,4-cyclohexadiene-1-carboxylate (SHCHC) to 2-succinylbenzoate (OSB). This chain is o-succinylbenzoate synthase, found in Escherichia coli O7:K1 (strain IAI39 / ExPEC).